Here is a 386-residue protein sequence, read N- to C-terminus: Lycopene beta-cyclase (386 aa).

4 to 34 lines the NAD(+) pocket; it reads DVLLAGAGLANGLIALALRAARPDLRVLLLD.

The protein belongs to the lycopene cyclase family. The cofactor is FAD.

It catalyses the reaction a carotenoid psi-end group = a carotenoid beta-end derivative. The catalysed reaction is all-trans-lycopene = gamma-carotene. The enzyme catalyses gamma-carotene = all-trans-beta-carotene. It participates in carotenoid biosynthesis; astaxanthin biosynthesis. Functionally, catalyzes the double cyclization reaction which converts lycopene to beta-carotene. In Paracoccus sp. (strain N81106 / MBIC 01143) (Agrobacterium aurantiacum), this protein is Lycopene beta-cyclase.